The chain runs to 645 residues: UPF0313 protein CLK_3381 (645 aa).

The 272-residue stretch at 295-566 (AIKEVKFSIT…RMQRALLQFS (272 aa)) folds into the Radical SAM core domain. [4Fe-4S] cluster-binding residues include cysteine 309, cysteine 313, and cysteine 316. Residues 598–645 (NKPYKKSHKKNNVKNNNNHYNKNNNYNKNKDVSKKNKKNSLSKHKKRK) are disordered. Residues 600 to 609 (PYKKSHKKNN) show a composition bias toward basic residues. Over residues 610–624 (VKNNNNHYNKNNNYN) the composition is skewed to low complexity. Residues 632–645 (KNKKNSLSKHKKRK) show a composition bias toward basic residues.

The protein belongs to the UPF0313 family. [4Fe-4S] cluster is required as a cofactor.

The protein is UPF0313 protein CLK_3381 of Clostridium botulinum (strain Loch Maree / Type A3).